A 248-amino-acid polypeptide reads, in one-letter code: DNA repair protein RecO (248 aa).

Belongs to the RecO family.

In terms of biological role, involved in DNA repair and RecF pathway recombination. This chain is DNA repair protein RecO, found in Bacillus mycoides (strain KBAB4) (Bacillus weihenstephanensis).